Reading from the N-terminus, the 180-residue chain is Putative adenylate kinase (180 aa).

G10, G12, K13, T14, and T15 together coordinate ATP. An NMP region spans residues 30–50 (NLRDFALEKGCGREVDGEVEV). The interval 99–109 (ERGYSKEKIGE) is LID. Positions 100 and 138 each coordinate ATP.

The protein belongs to the adenylate kinase family. AK6 subfamily. Interacts with uS11. Not a structural component of 40S pre-ribosomes, but transiently interacts with them by binding to uS11.

The catalysed reaction is AMP + ATP = 2 ADP. It catalyses the reaction ATP + H2O = ADP + phosphate + H(+). Functionally, broad-specificity nucleoside monophosphate (NMP) kinase that catalyzes the reversible transfer of the terminal phosphate group between nucleoside triphosphates and monophosphates. Also has ATPase activity. Involved in the late maturation steps of the 30S ribosomal particles, specifically 16S rRNA maturation. While NMP activity is not required for ribosome maturation, ATPase activity is. Associates transiently with small ribosomal subunit protein uS11. ATP hydrolysis breaks the interaction with uS11. May temporarily remove uS11 from the ribosome to enable a conformational change of the ribosomal RNA that is needed for the final maturation step of the small ribosomal subunit. This chain is Putative adenylate kinase, found in Pyrococcus abyssi (strain GE5 / Orsay).